The sequence spans 185 residues: Large ribosomal subunit protein uL5 (185 aa).

The protein belongs to the universal ribosomal protein uL5 family. As to quaternary structure, part of the 50S ribosomal subunit; part of the 5S rRNA/L5/L18/L25 subcomplex. Contacts the 5S rRNA and the P site tRNA. Forms a bridge to the 30S subunit in the 70S ribosome.

Its function is as follows. This is one of the proteins that bind and probably mediate the attachment of the 5S RNA into the large ribosomal subunit, where it forms part of the central protuberance. In the 70S ribosome it contacts protein S13 of the 30S subunit (bridge B1b), connecting the 2 subunits; this bridge is implicated in subunit movement. Contacts the P site tRNA; the 5S rRNA and some of its associated proteins might help stabilize positioning of ribosome-bound tRNAs. The polypeptide is Large ribosomal subunit protein uL5 (Bacteroides thetaiotaomicron (strain ATCC 29148 / DSM 2079 / JCM 5827 / CCUG 10774 / NCTC 10582 / VPI-5482 / E50)).